Consider the following 633-residue polypeptide: 1-deoxy-D-xylulose-5-phosphate synthase 2 (633 aa).

Residues His73 and 113-115 (SHA) each bind thiamine diphosphate. Asp145 provides a ligand contact to Mg(2+). Thiamine diphosphate contacts are provided by residues 146 to 147 (GA), Asn175, Tyr286, and Glu367. Asn175 provides a ligand contact to Mg(2+).

This sequence belongs to the transketolase family. DXPS subfamily. As to quaternary structure, homodimer. It depends on Mg(2+) as a cofactor. Requires thiamine diphosphate as cofactor.

It carries out the reaction D-glyceraldehyde 3-phosphate + pyruvate + H(+) = 1-deoxy-D-xylulose 5-phosphate + CO2. The protein operates within metabolic intermediate biosynthesis; 1-deoxy-D-xylulose 5-phosphate biosynthesis; 1-deoxy-D-xylulose 5-phosphate from D-glyceraldehyde 3-phosphate and pyruvate: step 1/1. Catalyzes the acyloin condensation reaction between C atoms 2 and 3 of pyruvate and glyceraldehyde 3-phosphate to yield 1-deoxy-D-xylulose-5-phosphate (DXP). The protein is 1-deoxy-D-xylulose-5-phosphate synthase 2 of Kitasatospora griseola (Streptomyces griseolosporeus).